The following is a 229-amino-acid chain: MTSKSLNAWVIHKQWSGDTSARLKLFTREMGLINCLCKGGRTPKKQSLLQAFIPLWVSIEERYDQYYTRNIESTSSRLDLEGHSLFSGLYINELLYYTLSPDFPDPDLFDAYLFTLNGIALAREREVIEALLRRFEWALLKACGYTFSFLHEARTGELIVPDSYYQFVAGEGFILGGDKKIPGEHLLAIAADNLSESAYLKSAKFIMRQAIDHLLGGREIKARSLYGPA.

The protein belongs to the RecO family.

Its function is as follows. Involved in DNA repair and RecF pathway recombination. The polypeptide is DNA repair protein RecO (Legionella pneumophila (strain Corby)).